The primary structure comprises 202 residues: Solute carrier family 66 member 3 (202 aa).

The signal sequence occupies residues 1-19 (MEAGLLWFCNWSTLGVCAA). A run of 4 helical transmembrane segments spans residues 33–53 (SARGISLPSLLLELAGFLVFL), 64–84 (LTYLEYPILIAQDIVLLLFVF), 94–114 (LPYMAVFVSSWFILSLQKWII), and 171–191 (LTILIRFVIMLALNIWVTATV).

It localises to the membrane. The chain is Solute carrier family 66 member 3 (Slc66a3) from Mus musculus (Mouse).